We begin with the raw amino-acid sequence, 223 residues long: Ribose-5-phosphate isomerase A (223 aa).

Substrate-binding positions include 28 to 31, 81 to 84, and 94 to 97; these read TGTT, DSAD, and KGGG. Glu-103 serves as the catalytic Proton acceptor. Substrate is bound at residue Lys-121.

Belongs to the ribose 5-phosphate isomerase family. As to quaternary structure, homodimer.

It carries out the reaction aldehydo-D-ribose 5-phosphate = D-ribulose 5-phosphate. Its pathway is carbohydrate degradation; pentose phosphate pathway; D-ribose 5-phosphate from D-ribulose 5-phosphate (non-oxidative stage): step 1/1. Its function is as follows. Catalyzes the reversible conversion of ribose-5-phosphate to ribulose 5-phosphate. This Buchnera aphidicola subsp. Acyrthosiphon pisum (strain 5A) protein is Ribose-5-phosphate isomerase A.